A 600-amino-acid polypeptide reads, in one-letter code: Proline dehydrogenase 1, mitochondrial (600 aa).

Residues 155–177 (AEHKEMESCTSAAERDGSGTNKR) are disordered. Residues Lys368 and Lys486 each carry the N6-acetyllysine modification.

The protein belongs to the proline oxidase family. FAD is required as a cofactor. Expressed in lung, skeletal muscle and brain, to a lesser extent in heart and kidney, and weakly in liver, placenta and pancreas.

It localises to the mitochondrion matrix. The catalysed reaction is L-proline + a quinone = (S)-1-pyrroline-5-carboxylate + a quinol + H(+). It participates in amino-acid degradation; L-proline degradation into L-glutamate; L-glutamate from L-proline: step 1/2. Its function is as follows. Converts proline to delta-1-pyrroline-5-carboxylate. The sequence is that of Proline dehydrogenase 1, mitochondrial from Homo sapiens (Human).